A 102-amino-acid chain; its full sequence is UPF0751 protein DSY4013 (102 aa).

This sequence belongs to the UPF0751 family.

This is UPF0751 protein DSY4013 from Desulfitobacterium hafniense (strain Y51).